Here is a 107-residue protein sequence, read N- to C-terminus: Replication initiation control protein YabA (107 aa).

Residues His81, Cys83, Cys97, and Cys100 each contribute to the Zn(2+) site.

The protein belongs to the YabA family. As to quaternary structure, homotetramer. Interacts with both DnaA and DnaN, acting as a bridge between these two proteins. It depends on Zn(2+) as a cofactor.

The protein resides in the cytoplasm. Its subcellular location is the nucleoid. In terms of biological role, involved in control of chromosome replication initiation. Inhibits the cooperative binding of DnaA to the oriC region, thus negatively regulating initiation of chromosome replication. Inhibits the ability of DnaA-ATP to form a helix on DNA; does not disassemble preformed DnaA-DNA helices. Decreases the residence time of DnaA on the chromosome at its binding sites (oriC, replication forks and promoter-binding sites). Tethers DnaA to the replication machinery via the DNA polymerase beta sliding clamp subunit (dnaN). Associates with oriC and other DnaA targets on the chromosome in a DnaA-dependent manner. The sequence is that of Replication initiation control protein YabA from Streptococcus equi subsp. zooepidemicus (strain MGCS10565).